Here is a 417-residue protein sequence, read N- to C-terminus: NADH-quinone oxidoreductase subunit D (417 aa).

It belongs to the complex I 49 kDa subunit family. As to quaternary structure, NDH-1 is composed of 14 different subunits. Subunits NuoB, C, D, E, F, and G constitute the peripheral sector of the complex.

The protein resides in the cell inner membrane. The enzyme catalyses a quinone + NADH + 5 H(+)(in) = a quinol + NAD(+) + 4 H(+)(out). In terms of biological role, NDH-1 shuttles electrons from NADH, via FMN and iron-sulfur (Fe-S) centers, to quinones in the respiratory chain. The immediate electron acceptor for the enzyme in this species is believed to be ubiquinone. Couples the redox reaction to proton translocation (for every two electrons transferred, four hydrogen ions are translocated across the cytoplasmic membrane), and thus conserves the redox energy in a proton gradient. In Chromobacterium violaceum (strain ATCC 12472 / DSM 30191 / JCM 1249 / CCUG 213 / NBRC 12614 / NCIMB 9131 / NCTC 9757 / MK), this protein is NADH-quinone oxidoreductase subunit D.